The following is a 110-amino-acid chain: Phosphoribosyl-ATP pyrophosphatase (110 aa).

The protein belongs to the PRA-PH family.

The protein resides in the cytoplasm. The enzyme catalyses 1-(5-phospho-beta-D-ribosyl)-ATP + H2O = 1-(5-phospho-beta-D-ribosyl)-5'-AMP + diphosphate + H(+). It participates in amino-acid biosynthesis; L-histidine biosynthesis; L-histidine from 5-phospho-alpha-D-ribose 1-diphosphate: step 2/9. The protein is Phosphoribosyl-ATP pyrophosphatase of Stutzerimonas stutzeri (strain A1501) (Pseudomonas stutzeri).